A 269-amino-acid polypeptide reads, in one-letter code: MENYGLFIDVGNTSVKIGIGVIDRLLISYTLSTNNSLSGDTLGIQLLQCINHAEQVINKDITISSCMMSSVVPTMDTLLQYACERFLLCKPHIINQDFIIPLDNHYEEQCEVGADRLVAAYAARRLFPDSKSVVSVDYGTATTFDCVTDNTYLGGLICPGIKSSLQALYTNTAKLPSIILNTASKVPIIGKNTKTSLTHGFLFGFATMTEGIYSKLINVLDGPVTFVATGGFARDMANVVCCFDAVCPDLILDGLHLLWIDCLSKSYSL.

Position 9–16 (9–16 (DVGNTSVK)) interacts with ATP. Residues Tyr106 and 113–116 (GADR) contribute to the substrate site. Asp115 serves as the catalytic Proton acceptor. A K(+)-binding site is contributed by Asp137. Thr140 provides a ligand contact to ATP. Thr193 is a substrate binding site.

This sequence belongs to the type III pantothenate kinase family. As to quaternary structure, homodimer. The cofactor is NH4(+). Requires K(+) as cofactor.

Its subcellular location is the cytoplasm. The catalysed reaction is (R)-pantothenate + ATP = (R)-4'-phosphopantothenate + ADP + H(+). The protein operates within cofactor biosynthesis; coenzyme A biosynthesis; CoA from (R)-pantothenate: step 1/5. In terms of biological role, catalyzes the phosphorylation of pantothenate (Pan), the first step in CoA biosynthesis. In Lawsonia intracellularis (strain PHE/MN1-00), this protein is Type III pantothenate kinase.